A 392-amino-acid polypeptide reads, in one-letter code: Formate-dependent phosphoribosylglycinamide formyltransferase (392 aa).

N(1)-(5-phospho-beta-D-ribosyl)glycinamide-binding positions include 22–23 (EL) and glutamate 82. Residues arginine 114, lysine 155, 160–165 (SSGKGQ), 195–198 (EGVV), and glutamate 203 contribute to the ATP site. The region spanning 119-308 (RLAAEELGLP…EFALHVRAFL (190 aa)) is the ATP-grasp domain. Positions 267 and 279 each coordinate Mg(2+). N(1)-(5-phospho-beta-D-ribosyl)glycinamide contacts are provided by residues aspartate 286, lysine 355, and 362-363 (RR).

This sequence belongs to the PurK/PurT family. In terms of assembly, homodimer.

It catalyses the reaction N(1)-(5-phospho-beta-D-ribosyl)glycinamide + formate + ATP = N(2)-formyl-N(1)-(5-phospho-beta-D-ribosyl)glycinamide + ADP + phosphate + H(+). The protein operates within purine metabolism; IMP biosynthesis via de novo pathway; N(2)-formyl-N(1)-(5-phospho-D-ribosyl)glycinamide from N(1)-(5-phospho-D-ribosyl)glycinamide (formate route): step 1/1. Involved in the de novo purine biosynthesis. Catalyzes the transfer of formate to 5-phospho-ribosyl-glycinamide (GAR), producing 5-phospho-ribosyl-N-formylglycinamide (FGAR). Formate is provided by PurU via hydrolysis of 10-formyl-tetrahydrofolate. The chain is Formate-dependent phosphoribosylglycinamide formyltransferase from Salmonella dublin (strain CT_02021853).